A 254-amino-acid chain; its full sequence is DNA repair protein RecO (254 aa).

It belongs to the RecO family.

In terms of biological role, involved in DNA repair and RecF pathway recombination. This chain is DNA repair protein RecO, found in Verminephrobacter eiseniae (strain EF01-2).